The chain runs to 142 residues: Cell division protein SepF (142 aa).

Residues 21-31 (ETTTVEEEREE) are compositionally biased toward acidic residues. Residues 21–46 (ETTTVEEEREEQESSHKRQPAISRTN) are disordered.

It belongs to the SepF family. As to quaternary structure, homodimer. Interacts with FtsZ.

It is found in the cytoplasm. Cell division protein that is part of the divisome complex and is recruited early to the Z-ring. Probably stimulates Z-ring formation, perhaps through the cross-linking of FtsZ protofilaments. Its function overlaps with FtsA. The polypeptide is Cell division protein SepF (Brevibacillus brevis (strain 47 / JCM 6285 / NBRC 100599)).